The following is a 103-amino-acid chain: N(4)-acetylcytidine amidohydrolase (103 aa).

Positions 6 to 101 constitute an ASCH domain; it reads ITFFQRFQDD…QTQFYVIEFK (96 aa). K21 serves as the catalytic Proton acceptor. T24 functions as the Nucleophile in the catalytic mechanism. The Proton donor role is filled by E74.

Belongs to the N(4)-acetylcytidine amidohydrolase family.

The enzyme catalyses N(4)-acetylcytidine + H2O = cytidine + acetate + H(+). It catalyses the reaction N(4)-acetyl-2'-deoxycytidine + H2O = 2'-deoxycytidine + acetate + H(+). The catalysed reaction is N(4)-acetylcytosine + H2O = cytosine + acetate + H(+). Its function is as follows. Catalyzes the hydrolysis of N(4)-acetylcytidine (ac4C). This is N(4)-acetylcytidine amidohydrolase (yqfB) from Escherichia coli O8 (strain IAI1).